The chain runs to 207 residues: MFKFTQHNGIVMPLDIANIDTDIIIPKQFLQKVNKLGFGKYLFHNWRFIDENQSQINPNFILNIEKYKKSSILLTRDNFGCGSSREHAVWALLDYGFKVIIAPSFSDIFYNNSFNNKLLLITLPNNQIDKFFNIINQNPGIYFNIDLLKNEIKVEKKIYSFQIDKFRRFCLLNGLDDIDLTLKNIEKIDSYEKKICNFLIKRKKFVS.

This sequence belongs to the LeuD family. LeuD type 1 subfamily. In terms of assembly, heterodimer of LeuC and LeuD.

It catalyses the reaction (2R,3S)-3-isopropylmalate = (2S)-2-isopropylmalate. It functions in the pathway amino-acid biosynthesis; L-leucine biosynthesis; L-leucine from 3-methyl-2-oxobutanoate: step 2/4. Catalyzes the isomerization between 2-isopropylmalate and 3-isopropylmalate, via the formation of 2-isopropylmaleate. This is 3-isopropylmalate dehydratase small subunit (leuD) from Buchnera aphidicola subsp. Pterocomma populeum.